Consider the following 345-residue polypeptide: Phosphoribosylformylglycinamidine cyclo-ligase (345 aa).

This sequence belongs to the AIR synthase family.

The protein localises to the cytoplasm. The enzyme catalyses 2-formamido-N(1)-(5-O-phospho-beta-D-ribosyl)acetamidine + ATP = 5-amino-1-(5-phospho-beta-D-ribosyl)imidazole + ADP + phosphate + H(+). The protein operates within purine metabolism; IMP biosynthesis via de novo pathway; 5-amino-1-(5-phospho-D-ribosyl)imidazole from N(2)-formyl-N(1)-(5-phospho-D-ribosyl)glycinamide: step 2/2. This chain is Phosphoribosylformylglycinamidine cyclo-ligase, found in Mannheimia succiniciproducens (strain KCTC 0769BP / MBEL55E).